Consider the following 480-residue polypeptide: Acetyl-coenzyme A carboxylase carboxyl transferase subunit beta, chloroplastic (480 aa).

Residues 212–480 (LWVQCENCYG…FPLNQINKYK (269 aa)) enclose the CoA carboxyltransferase N-terminal domain. Positions 216, 219, 235, and 238 each coordinate Zn(2+). The C4-type zinc-finger motif lies at 216 to 238 (CENCYGLNYQKFFRSKMNICERC).

The protein belongs to the AccD/PCCB family. In terms of assembly, acetyl-CoA carboxylase is a heterohexamer composed of biotin carboxyl carrier protein, biotin carboxylase and 2 subunits each of ACCase subunit alpha and ACCase plastid-coded subunit beta (accD). The cofactor is Zn(2+).

It is found in the plastid. The protein localises to the chloroplast stroma. It carries out the reaction N(6)-carboxybiotinyl-L-lysyl-[protein] + acetyl-CoA = N(6)-biotinyl-L-lysyl-[protein] + malonyl-CoA. Its pathway is lipid metabolism; malonyl-CoA biosynthesis; malonyl-CoA from acetyl-CoA: step 1/1. Functionally, component of the acetyl coenzyme A carboxylase (ACC) complex. Biotin carboxylase (BC) catalyzes the carboxylation of biotin on its carrier protein (BCCP) and then the CO(2) group is transferred by the transcarboxylase to acetyl-CoA to form malonyl-CoA. In Illicium oligandrum (Star anise), this protein is Acetyl-coenzyme A carboxylase carboxyl transferase subunit beta, chloroplastic.